The sequence spans 1339 residues: Astrotactin-2 (1339 aa).

A signal peptide spans 1-49 (MAAAGARLSPGPGSGLRGRPRLCFHPGPPPLLPLLLLFLLLLPPPPLLA). The Lumenal segment spans residues 50-206 (GATAAASREP…IVEEQMHILH (157 aa)). An N-linked (GlcNAc...) asparagine glycan is attached at Asn-168. A helical membrane pass occupies residues 207–227 (ISVMGGLIALLLLLLVFTVAL). Topologically, residues 228 to 434 (YAQRRWQKRR…KGLLKSPVNK (207 aa)) are cytoplasmic. Disordered stretches follow at residues 296–316 (EEDEEPPRRANHVSREDEFGS) and 363–408 (TPIE…ADDE). The chain crosses the membrane as a helical span at residues 435-455 (TALTLIAVSSCILAMVCGSQM). At 456–1339 (SCPLTVKVTL…RNTYGESKGR (884 aa)) the chain is on the lumenal side. EGF-like domains lie at 510-550 (VRDL…HLCV), 651-695 (PVRD…SGCY), and 699-751 (KGID…KSCL). Disulfide bonds link Cys-514–Cys-526, Cys-522–Cys-533, Cys-535–Cys-549, Cys-655–Cys-668, Cys-662–Cys-679, Cys-681–Cys-694, Cys-703–Cys-715, Cys-711–Cys-735, and Cys-737–Cys-750. Residues Asn-770 and Asn-783 are each glycosylated (N-linked (GlcNAc...) asparagine). 3 disulfide bridges follow: Cys-825–Cys-987, Cys-916–Cys-977, and Cys-983–Cys-990. Asn-1020 carries an N-linked (GlcNAc...) asparagine glycan. Intrachain disulfides connect Cys-1036–Cys-1047, Cys-1049–Cys-1062, Cys-1136–Cys-1158, Cys-1190–Cys-1277, and Cys-1298–Cys-1321. The Fibronectin type-III domain occupies 1065-1188 (LLQPVLRLSP…SELSTVTLRT (124 aa)).

It belongs to the astrotactin family. In terms of assembly, interacts with ASTN1; the interaction is not calcium-dependent.

It is found in the membrane. Its subcellular location is the perikaryon. The protein resides in the cytoplasm. The protein localises to the cell cortex. It localises to the early endosome. It is found in the late endosome. Its subcellular location is the cytoplasmic vesicle. The protein resides in the clathrin-coated vesicle. Functionally, mediates recycling of the neuronal cell adhesion molecule ASTN1 to the anterior pole of the cell membrane in migrating neurons. Promotes ASTN1 internalization and intracellular transport of endocytosed ASTN1. Selectively binds inositol-4,5-bisphosphate, inositol-3,4,5-trisphosphate and inositol-1,3,4,5-tetrakisphosphate, suggesting it is recruited to membranes that contain lipids with a phosphoinositide headgroup. In Homo sapiens (Human), this protein is Astrotactin-2 (ASTN2).